Reading from the N-terminus, the 109-residue chain is Cyclic di-AMP receptor A (109 aa).

T21, F25, T28, G35, F36, L37, N41, G47, E92, and G94 together coordinate 3',3'-c-di-AMP.

In terms of assembly, homotrimer.

Its subcellular location is the cytoplasm. Functionally, binds cyclic di-AMP (c-di-AMP) and is probably involved in c-di-AMP-mediated signaling pathways. In vitro, can also bind cyclic GMP-AMP (3'3'-cGAMP), with lower affinity, but not c-di-GMP or 2'3'-cGAMP. The polypeptide is Cyclic di-AMP receptor A (Bacillus subtilis (strain 168)).